We begin with the raw amino-acid sequence, 336 residues long: Ketol-acid reductoisomerase (NADP(+)) 1 (336 aa).

The 180-residue stretch at 2–181 (AKVYYEKDVT…GATRAGVLET (180 aa)) folds into the KARI N-terminal Rossmann domain. Residues 25–28 (YGSQ), Arg-48, Ser-52, and 82–85 (DELQ) each bind NADP(+). His-107 is a catalytic residue. Position 133 (Gly-133) interacts with NADP(+). Residues 182-327 (TFKEETETDL…RKLREMMPFV (146 aa)) form the KARI C-terminal knotted domain. Mg(2+) is bound by residues Asp-190, Glu-194, Glu-226, and Glu-230. Ser-251 serves as a coordination point for substrate.

The protein belongs to the ketol-acid reductoisomerase family. Mg(2+) serves as cofactor.

The catalysed reaction is (2R)-2,3-dihydroxy-3-methylbutanoate + NADP(+) = (2S)-2-acetolactate + NADPH + H(+). It catalyses the reaction (2R,3R)-2,3-dihydroxy-3-methylpentanoate + NADP(+) = (S)-2-ethyl-2-hydroxy-3-oxobutanoate + NADPH + H(+). It functions in the pathway amino-acid biosynthesis; L-isoleucine biosynthesis; L-isoleucine from 2-oxobutanoate: step 2/4. It participates in amino-acid biosynthesis; L-valine biosynthesis; L-valine from pyruvate: step 2/4. Functionally, involved in the biosynthesis of branched-chain amino acids (BCAA). Catalyzes an alkyl-migration followed by a ketol-acid reduction of (S)-2-acetolactate (S2AL) to yield (R)-2,3-dihydroxy-isovalerate. In the isomerase reaction, S2AL is rearranged via a Mg-dependent methyl migration to produce 3-hydroxy-3-methyl-2-ketobutyrate (HMKB). In the reductase reaction, this 2-ketoacid undergoes a metal-dependent reduction by NADPH to yield (R)-2,3-dihydroxy-isovalerate. The polypeptide is Ketol-acid reductoisomerase (NADP(+)) 1 (Bacillus cereus (strain ATCC 14579 / DSM 31 / CCUG 7414 / JCM 2152 / NBRC 15305 / NCIMB 9373 / NCTC 2599 / NRRL B-3711)).